We begin with the raw amino-acid sequence, 250 residues long: 3-deoxy-manno-octulosonate cytidylyltransferase (250 aa).

Belongs to the KdsB family.

Its subcellular location is the cytoplasm. It carries out the reaction 3-deoxy-alpha-D-manno-oct-2-ulosonate + CTP = CMP-3-deoxy-beta-D-manno-octulosonate + diphosphate. The protein operates within nucleotide-sugar biosynthesis; CMP-3-deoxy-D-manno-octulosonate biosynthesis; CMP-3-deoxy-D-manno-octulosonate from 3-deoxy-D-manno-octulosonate and CTP: step 1/1. It participates in bacterial outer membrane biogenesis; lipopolysaccharide biosynthesis. Functionally, activates KDO (a required 8-carbon sugar) for incorporation into bacterial lipopolysaccharide in Gram-negative bacteria. The protein is 3-deoxy-manno-octulosonate cytidylyltransferase of Sinorhizobium medicae (strain WSM419) (Ensifer medicae).